The primary structure comprises 188 residues: Protein CRIPTO3 (188 aa).

The region spanning 78 to 107 (LNRTCCLNGGTCMLESFCACPPSFYGRNCE) is the EGF-like domain. An N-linked (GlcNAc...) asparagine glycan is attached at N79. 6 cysteine pairs are disulfide-bonded: C82-C89, C83-C95, C97-C106, C115-C133, C128-C149, and C131-C140.

It belongs to the EGF-CFC (Cripto-1/FRL1/Cryptic) family. As to expression, expressed weakly in lung, colon and breast. Expressed also strongly in primary cancer tissues; lung and colon cancers.

The protein resides in the cell membrane. In terms of biological role, could play a role in the determination of the epiblastic cells that subsequently give rise to the mesoderm. Activates the Nodal-dependent signaling pathway. The polypeptide is Protein CRIPTO3 (Homo sapiens (Human)).